Reading from the N-terminus, the 119-residue chain is Large ribosomal subunit protein uL22 (119 aa).

The protein belongs to the universal ribosomal protein uL22 family. Part of the 50S ribosomal subunit.

Its function is as follows. This protein binds specifically to 23S rRNA; its binding is stimulated by other ribosomal proteins, e.g. L4, L17, and L20. It is important during the early stages of 50S assembly. It makes multiple contacts with different domains of the 23S rRNA in the assembled 50S subunit and ribosome. The globular domain of the protein is located near the polypeptide exit tunnel on the outside of the subunit, while an extended beta-hairpin is found that lines the wall of the exit tunnel in the center of the 70S ribosome. The polypeptide is Large ribosomal subunit protein uL22 (Rickettsia canadensis (strain McKiel)).